The following is a 166-amino-acid chain: C-signal (166 aa).

In terms of processing, the mature C-signal (p17) is derived from the precursor sequence (p25) by proteolytic cleavage. The subtilisin-like protease PopC is directly responsible for cleavage of p25 to p17. The cleavage site is probably located between amino acid residues 60 and 68 in p25.

Its subcellular location is the secreted. The protein localises to the cell outer membrane. Its activity is regulated as follows. Synthesized as a precursor protein (p25), which is cleaved after secretion to generate the mature active C-signal (p17). The p25 precursor purified from M.xanthus cells does not display C-signal activity. In terms of biological role, cell-cell signaling protein required for fruiting body formation, a multicellular developmental program that is induced in response to starvation. Necessary for rippling, cellular aggregation, spore differentiation and for gene expression that is initiated after 6 hours of starvation. In starving cells, the C-signal directly induces aggregation and sporulation, which are induced at distinct threshold levels of C-signaling. Contact with C-signaling induces cells to glide with high speed and low stop and reversal frequencies toward aggregation centers. The C-signal acts as a morphogen and induces distinct events at distinct threshold levels. A regulated increase in the level of C-signaling during development ensures the correct temporal order of aggregation and sporulation. This is C-signal from Myxococcus xanthus.